The chain runs to 94 residues: Small ribosomal subunit protein bS18 (94 aa).

Belongs to the bacterial ribosomal protein bS18 family. Part of the 30S ribosomal subunit. Forms a tight heterodimer with protein bS6.

In terms of biological role, binds as a heterodimer with protein bS6 to the central domain of the 16S rRNA, where it helps stabilize the platform of the 30S subunit. The chain is Small ribosomal subunit protein bS18 from Leptospira biflexa serovar Patoc (strain Patoc 1 / Ames).